The sequence spans 458 residues: Vasoactive intestinal polypeptide receptor 1 (458 aa).

The N-terminal stretch at 1–31 (MRPLSPPPAGWFCVLAGVLACVLGPVGSWAV) is a signal peptide. At 32–142 (GLQQEECDYL…DEQQTVFYNS (111 aa)) the chain is on the extracellular side. 5 disulfide bridges follow: Cys-38/Cys-209, Cys-51/Cys-73, Cys-64/Cys-106, Cys-87/Cys-123, and Cys-216/Cys-286. N-linked (GlcNAc...) asparagine glycosylation is found at Asn-59, Asn-70, Asn-101, and Asn-105. The helical transmembrane segment at 143–167 (VKTGYTIGYSLSLAALLVATAILSL) threads the bilayer. Residues 168–175 (FRKLHCTR) lie on the Cytoplasmic side of the membrane. The helical transmembrane segment at 176 to 197 (NYIHMHLFISFILRATAVFIKD) threads the bilayer. Topologically, residues 198-217 (LALFDSEESDHCSKGSVGCK) are extracellular. The chain crosses the membrane as a helical span at residues 218–242 (AAVVLFQYCVMANFFWLLVEGLYLH). Residues 243-255 (TLLAVSFFSERKY) lie on the Cytoplasmic side of the membrane. The chain crosses the membrane as a helical span at residues 256-277 (FWGYIFVGWGVPSTFIMVWTVV). At 278 to 292 (RIHFEDYGCWDTIHS) the chain is on the extracellular side. Residues 293–317 (SLWWIIKAPILASILVNFILFIRII) traverse the membrane as a helical segment. At 318 to 339 (GILVQKLRPPDVGKSDNSPYSR) the chain is on the cytoplasmic side. Residues 340 to 360 (LAKSTLLLIPLFGVHYIMFAF) form a helical membrane-spanning segment. The Extracellular portion of the chain corresponds to 361-368 (FPDNFKAE). The chain crosses the membrane as a helical span at residues 369–392 (VKMVFELIVGSFQGCVVAILYCFL). Over 393-458 (NGEVQAELRR…SSFQAEVSLV (66 aa)) the chain is Cytoplasmic.

This sequence belongs to the G-protein coupled receptor 2 family. Interacts with ADCYAP1/PACAP; activated by both PACAP27 and PACAP38 neuropeptides. Interacts with VIP; the interaction results in VIPR1 activation.

The protein resides in the cell membrane. In terms of biological role, g protein-coupled receptor activated by the neuropeptides vasoactive intestinal peptide (VIP) and pituitary adenylate cyclase-activating polypeptide (ADCYAP1/PACAP). Binds VIP and both PACAP27 and PACAP38 bioactive peptides with the following order of ligand affinity VIP = PACAP27 &gt; PACAP38. Ligand binding causes a conformation change that triggers signaling via guanine nucleotide-binding proteins (G proteins) and modulates the activity of downstream effectors. Activates cAMP-dependent pathway. This chain is Vasoactive intestinal polypeptide receptor 1 (VIPR1), found in Sus scrofa (Pig).